A 398-amino-acid chain; its full sequence is Argininosuccinate synthase (398 aa).

8 to 16 (AYSGGLDTT) contacts ATP. An L-citrulline-binding site is contributed by Tyr-87. Gly-117 serves as a coordination point for ATP. Thr-119, Asn-123, and Asp-124 together coordinate L-aspartate. Residue Asn-123 coordinates L-citrulline. Residues Arg-127, Ser-175, Glu-259, and Tyr-271 each coordinate L-citrulline.

The protein belongs to the argininosuccinate synthase family. Type 1 subfamily. Homotetramer.

The protein localises to the cytoplasm. The catalysed reaction is L-citrulline + L-aspartate + ATP = 2-(N(omega)-L-arginino)succinate + AMP + diphosphate + H(+). The protein operates within amino-acid biosynthesis; L-arginine biosynthesis; L-arginine from L-ornithine and carbamoyl phosphate: step 2/3. In Corynebacterium jeikeium (strain K411), this protein is Argininosuccinate synthase.